The chain runs to 276 residues: NH(3)-dependent NAD(+) synthetase (276 aa).

An ATP-binding site is contributed by 43 to 50 (GISGGVDS). Asp49 serves as a coordination point for Mg(2+). Arg146 is a deamido-NAD(+) binding site. Thr166 provides a ligand contact to ATP. Glu171 contacts Mg(2+). Deamido-NAD(+) contacts are provided by Lys179 and Asp186. Lys195 and Thr217 together coordinate ATP. Position 266–267 (266–267 (HK)) interacts with deamido-NAD(+).

Belongs to the NAD synthetase family. In terms of assembly, homodimer.

It carries out the reaction deamido-NAD(+) + NH4(+) + ATP = AMP + diphosphate + NAD(+) + H(+). The protein operates within cofactor biosynthesis; NAD(+) biosynthesis; NAD(+) from deamido-NAD(+) (ammonia route): step 1/1. Functionally, catalyzes the ATP-dependent amidation of deamido-NAD to form NAD. Uses ammonia as a nitrogen source. The sequence is that of NH(3)-dependent NAD(+) synthetase from Vibrio atlanticus (strain LGP32) (Vibrio splendidus (strain Mel32)).